Here is a 262-residue protein sequence, read N- to C-terminus: Leucine-rich repeat-containing protein 18 (262 aa).

7 LRR repeats span residues 28-49 (GRKR…ILRL), 51-72 (DIDE…IAKF), 74-95 (NLRW…IGQM), 97-118 (SLLF…VELN), 122-144 (NIRT…GALK), 145-167 (ELHE…AKLP), and 168-189 (KLKK…EMFV).

In terms of tissue distribution, exclusively expressed in spermatocytes and roud spermatids within seminiferous tubules during spermatogenesis.

The protein localises to the cytoplasm. In terms of biological role, may be involved in the regulation of spermatogenesis and sperm maturation. In Mus musculus (Mouse), this protein is Leucine-rich repeat-containing protein 18 (Lrrc18).